An 85-amino-acid chain; its full sequence is Transcriptional repressor protein KorC (85 aa).

The segment at residues 28 to 47 (EVLRLAGLTGGKAAKVLGLG) is a DNA-binding region (H-T-H motif).

Functionally, acts with KorA as corepressor in the control of the kilC and kilE operons. This chain is Transcriptional repressor protein KorC (korC), found in Escherichia coli.